Consider the following 185-residue polypeptide: Elongation factor P (185 aa).

Belongs to the elongation factor P family.

It localises to the cytoplasm. The protein operates within protein biosynthesis; polypeptide chain elongation. In terms of biological role, involved in peptide bond synthesis. Stimulates efficient translation and peptide-bond synthesis on native or reconstituted 70S ribosomes in vitro. Probably functions indirectly by altering the affinity of the ribosome for aminoacyl-tRNA, thus increasing their reactivity as acceptors for peptidyl transferase. This chain is Elongation factor P, found in Deinococcus geothermalis (strain DSM 11300 / CIP 105573 / AG-3a).